A 165-amino-acid chain; its full sequence is Neurotrophin-3 (165 aa).

A signal peptide spans Ile1–Ser3. Positions Thr4–Arg119 are excised as a propeptide. A glycan (N-linked (GlcNAc...) asparagine) is linked at Asn112.

The protein belongs to the NGF-beta family.

It is found in the secreted. Functionally, seems to promote the survival of visceral and proprioceptive sensory neurons. The chain is Neurotrophin-3 (NTF3) from Anilius scytale (Coral cylinder snake).